Here is an 88-residue protein sequence, read N- to C-terminus: Small ribosomal subunit protein bS20 (88 aa).

The protein belongs to the bacterial ribosomal protein bS20 family.

Its function is as follows. Binds directly to 16S ribosomal RNA. This chain is Small ribosomal subunit protein bS20, found in Methylorubrum extorquens (strain CM4 / NCIMB 13688) (Methylobacterium extorquens).